The primary structure comprises 262 residues: Ornithine carbamoyltransferase (262 aa).

Carbamoyl phosphate-binding positions include 3–7, glutamine 30, arginine 54, and 81–84; these read STRTR and HPTQ. L-ornithine is bound by residues asparagine 114, aspartate 178, and 182 to 183; that span reads SM. Residues 219 to 222 and threonine 247 contribute to the carbamoyl phosphate site; that span reads HCLP.

It belongs to the aspartate/ornithine carbamoyltransferase superfamily. OTCase family.

It localises to the cytoplasm. It catalyses the reaction carbamoyl phosphate + L-ornithine = L-citrulline + phosphate + H(+). The protein operates within amino-acid biosynthesis; L-arginine biosynthesis; L-arginine from L-ornithine and carbamoyl phosphate: step 1/3. Reversibly catalyzes the transfer of the carbamoyl group from carbamoyl phosphate (CP) to the N(epsilon) atom of ornithine (ORN) to produce L-citrulline. This Neisseria polysaccharea protein is Ornithine carbamoyltransferase (argF).